The following is a 485-amino-acid chain: Adenosylhomocysteinase (485 aa).

Residues threonine 64, aspartate 139, and glutamate 205 each contribute to the substrate site. 206–208 (TTT) contacts NAD(+). The substrate site is built by lysine 235 and aspartate 239. NAD(+)-binding positions include asparagine 240, 269–274 (GYGDVG), glutamate 292, asparagine 327, 348–350 (IGH), and asparagine 397.

The protein belongs to the adenosylhomocysteinase family. NAD(+) serves as cofactor.

It catalyses the reaction S-adenosyl-L-homocysteine + H2O = L-homocysteine + adenosine. Its pathway is amino-acid biosynthesis; L-homocysteine biosynthesis; L-homocysteine from S-adenosyl-L-homocysteine: step 1/1. In terms of biological role, adenosylhomocysteine is a competitive inhibitor of S-adenosyl-L-methionine-dependent methyl transferase reactions; therefore adenosylhomocysteinase may play a key role in the control of methylations via regulation of the intracellular concentration of adenosylhomocysteine. This is Adenosylhomocysteinase (SAHH) from Medicago sativa (Alfalfa).